We begin with the raw amino-acid sequence, 266 residues long: Receptor-like protein 5 (266 aa).

The signal sequence occupies residues 1-19; the sequence is MINYRHIVFCLCVMVVVDS. Residues 20 to 169 lie on the Extracellular side of the membrane; sequence RLTPYLAAIE…PTRNKNKPTV (150 aa). LRR repeat units lie at residues 93–117 and 119–143; these read LTSLRVIDLSHNRLKCTIPFEITKL and NLTIVDVSYNQLHGEVPRVRGIVIL. Asn-119 carries an N-linked (GlcNAc...) asparagine glycan. A helical membrane pass occupies residues 170-190; it reads LVLLLGILVGLVVAGGASFGF. Over 191-266 the chain is Cytoplasmic; the sequence is YLYRIRKQPK…TNQNPHLPYM (76 aa).

This sequence belongs to the RLP family.

The protein localises to the cell membrane. This Arabidopsis thaliana (Mouse-ear cress) protein is Receptor-like protein 5.